The primary structure comprises 422 residues: Inhibitory synaptic factor 2A (422 aa).

A disordered region spans residues 143–163; that stretch reads FLADSKEKSEAGPMEEPRPCS. The segment covering 146-160 has biased composition (basic and acidic residues); the sequence is DSKEKSEAGPMEEPR. Position 177 is a phosphoserine (Ser177). Positions 344–370 form a coiled coil; the sequence is TEVVDLKAQLQVMENLISSSQETIKVL.

This sequence belongs to the INSYN2 family. As to quaternary structure, interacts with GPHN.

The protein resides in the postsynaptic density. Component of the protein machinery at the inhibitory synapses, probably acting as a scaffold. Inhibitory synapses dampen neuronal activity through postsynaptic hyperpolarization. This synaptic inhibition is fundamental for the functioning of the central nervous system, shaping and orchestrating the flow of information through neuronal networks to generate a precise neural code. This chain is Inhibitory synaptic factor 2A, found in Mus musculus (Mouse).